Here is a 113-residue protein sequence, read N- to C-terminus: Large ribosomal subunit protein uL22 (113 aa).

The protein belongs to the universal ribosomal protein uL22 family. Part of the 50S ribosomal subunit.

Its function is as follows. This protein binds specifically to 23S rRNA; its binding is stimulated by other ribosomal proteins, e.g. L4, L17, and L20. It is important during the early stages of 50S assembly. It makes multiple contacts with different domains of the 23S rRNA in the assembled 50S subunit and ribosome. In terms of biological role, the globular domain of the protein is located near the polypeptide exit tunnel on the outside of the subunit, while an extended beta-hairpin is found that lines the wall of the exit tunnel in the center of the 70S ribosome. The polypeptide is Large ribosomal subunit protein uL22 (Trichlorobacter lovleyi (strain ATCC BAA-1151 / DSM 17278 / SZ) (Geobacter lovleyi)).